Reading from the N-terminus, the 161-residue chain is RNA pyrophosphohydrolase (161 aa).

Positions 12–154 (PYRIGVGMVI…KRKLYKAVIN (143 aa)) constitute a Nudix hydrolase domain. Residues 46–67 (GGIILGETYSKAVLREMKEEIG) carry the Nudix box motif.

This sequence belongs to the Nudix hydrolase family. RppH subfamily. A divalent metal cation is required as a cofactor.

Accelerates the degradation of transcripts by removing pyrophosphate from the 5'-end of triphosphorylated RNA, leading to a more labile monophosphorylated state that can stimulate subsequent ribonuclease cleavage. In Orientia tsutsugamushi (strain Boryong) (Rickettsia tsutsugamushi), this protein is RNA pyrophosphohydrolase.